Consider the following 340-residue polypeptide: Phosphoribosylformylglycinamidine cyclo-ligase (340 aa).

Belongs to the AIR synthase family.

It is found in the cytoplasm. It carries out the reaction 2-formamido-N(1)-(5-O-phospho-beta-D-ribosyl)acetamidine + ATP = 5-amino-1-(5-phospho-beta-D-ribosyl)imidazole + ADP + phosphate + H(+). The protein operates within purine metabolism; IMP biosynthesis via de novo pathway; 5-amino-1-(5-phospho-D-ribosyl)imidazole from N(2)-formyl-N(1)-(5-phospho-D-ribosyl)glycinamide: step 2/2. This Crocosphaera subtropica (strain ATCC 51142 / BH68) (Cyanothece sp. (strain ATCC 51142)) protein is Phosphoribosylformylglycinamidine cyclo-ligase.